Consider the following 219-residue polypeptide: Predicted GPI-anchored protein 6 (219 aa).

The N-terminal stretch at 1 to 19 (MQFQTLLVVAGSLVASTLA) is a signal peptide. N-linked (GlcNAc...) asparagine glycosylation is found at Asn21, Asn173, and Asn188. The GPI-anchor amidated glycine moiety is linked to residue Gly194. Residues 195 to 219 (GAVGGASNQITVGFAAIAGLAAILL) constitute a propeptide, removed in mature form.

This sequence belongs to the flocculin family. The GPI-anchor is attached to the protein in the endoplasmic reticulum and serves to target the protein to the cell surface. There, the glucosamine-inositol phospholipid moiety is cleaved off and the GPI-modified mannoprotein is covalently attached via its lipidless GPI glycan remnant to the 1,6-beta-glucan of the outer cell wall layer.

Its subcellular location is the secreted. It localises to the cell wall. The protein localises to the membrane. In terms of biological role, probable cell wall protein that participates directly in adhesive cell-cell interactions. This chain is Predicted GPI-anchored protein 6 (PGA6), found in Candida albicans (strain SC5314 / ATCC MYA-2876) (Yeast).